Reading from the N-terminus, the 600-residue chain is Translation initiation factor IF-2 (600 aa).

The tr-type G domain occupies 112-279 (ERAPIITVMG…AINLQAEILE (168 aa)). Positions 121 to 128 (GHVDHGKT) are G1. 121 to 128 (GHVDHGKT) lines the GTP pocket. Residues 146 to 150 (GITQH) form a G2 region. The segment at 167–170 (DTPG) is G3. Residues 167–171 (DTPGH) and 221–224 (NKMD) contribute to the GTP site. Residues 221–224 (NKMD) are G4. The interval 257-259 (SAL) is G5.

This sequence belongs to the TRAFAC class translation factor GTPase superfamily. Classic translation factor GTPase family. IF-2 subfamily.

It is found in the cytoplasm. In terms of biological role, one of the essential components for the initiation of protein synthesis. Protects formylmethionyl-tRNA from spontaneous hydrolysis and promotes its binding to the 30S ribosomal subunits. Also involved in the hydrolysis of GTP during the formation of the 70S ribosomal complex. The chain is Translation initiation factor IF-2 from Mycoplasma mobile (strain ATCC 43663 / 163K / NCTC 11711) (Mesomycoplasma mobile).